The primary structure comprises 341 residues: S-adenosylmethionine:tRNA ribosyltransferase-isomerase (341 aa).

This sequence belongs to the QueA family. As to quaternary structure, monomer.

The protein localises to the cytoplasm. It catalyses the reaction 7-aminomethyl-7-carbaguanosine(34) in tRNA + S-adenosyl-L-methionine = epoxyqueuosine(34) in tRNA + adenine + L-methionine + 2 H(+). It functions in the pathway tRNA modification; tRNA-queuosine biosynthesis. Functionally, transfers and isomerizes the ribose moiety from AdoMet to the 7-aminomethyl group of 7-deazaguanine (preQ1-tRNA) to give epoxyqueuosine (oQ-tRNA). In Alkaliphilus metalliredigens (strain QYMF), this protein is S-adenosylmethionine:tRNA ribosyltransferase-isomerase.